A 315-amino-acid chain; its full sequence is Ribosomal RNA small subunit methyltransferase H (315 aa).

Residues 1 to 21 (MNVVNVVPMHLPPPPPRPRGE) are disordered. Residues 51–53 (GGH), aspartate 69, phenylalanine 96, aspartate 117, and glutamine 124 each bind S-adenosyl-L-methionine. The segment at 281-315 (KKPVTAGDDEVEGNPRARSAKLRAARRVGGAEALA) is disordered.

Belongs to the methyltransferase superfamily. RsmH family.

The protein resides in the cytoplasm. It carries out the reaction cytidine(1402) in 16S rRNA + S-adenosyl-L-methionine = N(4)-methylcytidine(1402) in 16S rRNA + S-adenosyl-L-homocysteine + H(+). Specifically methylates the N4 position of cytidine in position 1402 (C1402) of 16S rRNA. In Sorangium cellulosum (strain So ce56) (Polyangium cellulosum (strain So ce56)), this protein is Ribosomal RNA small subunit methyltransferase H.